Here is a 383-residue protein sequence, read N- to C-terminus: L-lactate dehydrogenase (383 aa).

The FMN hydroxy acid dehydrogenase domain maps to 1-380; that stretch reads MIISSGNDYR…NTDCLVQAIK (380 aa). Tyr-24 provides a ligand contact to substrate. Residues Ser-106 and Gln-127 each contribute to the FMN site. Residue Tyr-129 coordinates substrate. Residue Thr-155 coordinates FMN. Residue Arg-164 coordinates substrate. Lys-251 serves as a coordination point for FMN. His-275 acts as the Proton acceptor in catalysis. Position 278 (Arg-278) interacts with substrate. An FMN-binding site is contributed by 306–330; sequence DSGIRNGLDVVRMLALGADTVLLGR.

This sequence belongs to the FMN-dependent alpha-hydroxy acid dehydrogenase family. FMN is required as a cofactor.

The protein localises to the cell inner membrane. It catalyses the reaction (S)-lactate + A = pyruvate + AH2. Functionally, catalyzes the conversion of L-lactate to pyruvate. Is coupled to the respiratory chain. The sequence is that of L-lactate dehydrogenase from Acinetobacter baumannii (strain SDF).